A 377-amino-acid polypeptide reads, in one-letter code: tRNA-specific 2-thiouridylase MnmA (377 aa).

Residues 16 to 23 (GMSGGVDS) and M42 contribute to the ATP site. Residues 102 to 104 (NPD) are interaction with target base in tRNA. The active-site Nucleophile is C107. The cysteines at positions 107 and 204 are disulfide-linked. Residue G131 coordinates ATP. Residues 154–156 (KDQ) form an interaction with tRNA region. Catalysis depends on C204, which acts as the Cysteine persulfide intermediate. Positions 315–316 (RY) are interaction with tRNA.

It belongs to the MnmA/TRMU family.

Its subcellular location is the cytoplasm. It catalyses the reaction S-sulfanyl-L-cysteinyl-[protein] + uridine(34) in tRNA + AH2 + ATP = 2-thiouridine(34) in tRNA + L-cysteinyl-[protein] + A + AMP + diphosphate + H(+). Functionally, catalyzes the 2-thiolation of uridine at the wobble position (U34) of tRNA, leading to the formation of s(2)U34. The protein is tRNA-specific 2-thiouridylase MnmA of Lacticaseibacillus paracasei (strain ATCC 334 / BCRC 17002 / CCUG 31169 / CIP 107868 / KCTC 3260 / NRRL B-441) (Lactobacillus paracasei).